A 339-amino-acid chain; its full sequence is Tetraacyldisaccharide 4'-kinase (339 aa).

ATP is bound at residue Val-62–Thr-69.

Belongs to the LpxK family.

The catalysed reaction is a lipid A disaccharide + ATP = a lipid IVA + ADP + H(+). Its pathway is glycolipid biosynthesis; lipid IV(A) biosynthesis; lipid IV(A) from (3R)-3-hydroxytetradecanoyl-[acyl-carrier-protein] and UDP-N-acetyl-alpha-D-glucosamine: step 6/6. Transfers the gamma-phosphate of ATP to the 4'-position of a tetraacyldisaccharide 1-phosphate intermediate (termed DS-1-P) to form tetraacyldisaccharide 1,4'-bis-phosphate (lipid IVA). The chain is Tetraacyldisaccharide 4'-kinase from Xylella fastidiosa (strain M23).